The sequence spans 275 residues: 4-hydroxy-tetrahydrodipicolinate reductase (275 aa).

12–17 (GAAGRM) contributes to the NAD(+) binding site. NADP(+) is bound at residue Arg-39. NAD(+) is bound by residues 102–104 (GTT) and 126–129 (SGNM). His-160 serves as the catalytic Proton donor/acceptor. His-161 is a binding site for (S)-2,3,4,5-tetrahydrodipicolinate. The active-site Proton donor is Lys-164. 170–171 (GT) is a (S)-2,3,4,5-tetrahydrodipicolinate binding site.

The protein belongs to the DapB family.

It localises to the cytoplasm. The catalysed reaction is (S)-2,3,4,5-tetrahydrodipicolinate + NAD(+) + H2O = (2S,4S)-4-hydroxy-2,3,4,5-tetrahydrodipicolinate + NADH + H(+). It carries out the reaction (S)-2,3,4,5-tetrahydrodipicolinate + NADP(+) + H2O = (2S,4S)-4-hydroxy-2,3,4,5-tetrahydrodipicolinate + NADPH + H(+). The protein operates within amino-acid biosynthesis; L-lysine biosynthesis via DAP pathway; (S)-tetrahydrodipicolinate from L-aspartate: step 4/4. Functionally, catalyzes the conversion of 4-hydroxy-tetrahydrodipicolinate (HTPA) to tetrahydrodipicolinate. This chain is 4-hydroxy-tetrahydrodipicolinate reductase, found in Agrobacterium fabrum (strain C58 / ATCC 33970) (Agrobacterium tumefaciens (strain C58)).